Here is a 162-residue protein sequence, read N- to C-terminus: Xanthine-guanine phosphoribosyltransferase (162 aa).

5-phospho-alpha-D-ribose 1-diphosphate contacts are provided by residues 41-42 (RG) and 92-100 (DDLVDTGNT). D93 is a binding site for Mg(2+). 2 residues coordinate guanine: D96 and I139. Xanthine contacts are provided by D96 and I139. GMP-binding positions include 96 to 100 (DTGNT) and 138 to 139 (WI).

This sequence belongs to the purine/pyrimidine phosphoribosyltransferase family. XGPT subfamily. Homotetramer. Mg(2+) is required as a cofactor.

The protein localises to the cell inner membrane. The catalysed reaction is GMP + diphosphate = guanine + 5-phospho-alpha-D-ribose 1-diphosphate. The enzyme catalyses XMP + diphosphate = xanthine + 5-phospho-alpha-D-ribose 1-diphosphate. It catalyses the reaction IMP + diphosphate = hypoxanthine + 5-phospho-alpha-D-ribose 1-diphosphate. The protein operates within purine metabolism; GMP biosynthesis via salvage pathway; GMP from guanine: step 1/1. It functions in the pathway purine metabolism; XMP biosynthesis via salvage pathway; XMP from xanthine: step 1/1. Its function is as follows. Purine salvage pathway enzyme that catalyzes the transfer of the ribosyl-5-phosphate group from 5-phospho-alpha-D-ribose 1-diphosphate (PRPP) to the N9 position of the 6-oxopurines guanine and xanthine to form the corresponding ribonucleotides GMP (guanosine 5'-monophosphate) and XMP (xanthosine 5'-monophosphate), with the release of PPi. To a lesser extent, also acts on hypoxanthine. This chain is Xanthine-guanine phosphoribosyltransferase, found in Chromohalobacter salexigens (strain ATCC BAA-138 / DSM 3043 / CIP 106854 / NCIMB 13768 / 1H11).